The sequence spans 553 residues: Transcription factor IIIB 70 kDa subunit (553 aa).

The segment at 6 to 39 (KQQKCKTCGHTQFDVNRYTAAGDVSCLRCGTVLE) adopts a TFIIB-type zinc-finger fold. Zn(2+) is bound by residues Cys10, Cys13, Cys31, and Cys34. Tandem repeats lie at residues 98-174 (IAAA…KMVK) and 193-272 (FVEK…EFKK). The tract at residues 98–272 (IAAALKIPDY…LQRRLNEFKK (175 aa)) is interaction with TBP and with the Pol III subunit C34. The segment at 281–553 (KSFREVENLE…KGLLGGNMGF (273 aa)) is interaction with TBP. The segment at 473–523 (KQEADELTGNTSKSSSGNRRKRNKSSLPAELRKELGDIDLDEDGTPRSAAD) is disordered. Positions 480–489 (TGNTSKSSSG) are enriched in low complexity.

The protein belongs to the TFIIB family. TFIIIB comprises the TATA-binding protein (TBP), the B-related factor (BRF) and a 70 kDa polypeptide.

The protein resides in the nucleus. Its function is as follows. General activator of RNA polymerase III transcription. Interacts with TBP. Binds to Pol III subunit C34 and to the TAU135 component of TFIIIC. The chain is Transcription factor IIIB 70 kDa subunit (TDS4) from Candida albicans (strain SC5314 / ATCC MYA-2876) (Yeast).